We begin with the raw amino-acid sequence, 566 residues long: Deformed epidermal autoregulatory factor 1 homolog (566 aa).

Disordered regions lie at residues 33–62 and 163–191; these read AESE…ETRR and GLKG…KGGT. Over residues 170–182 the composition is skewed to pro residues; sequence PLTPGPQSPPTPL. The residue at position 172 (Thr172) is a Phosphothreonine. At Ser177 the chain carries Phosphoserine. A Phosphothreonine modification is found at Thr180. One can recognise an SAND domain in the interval 194 to 274; that stretch reads NWDPSVYDSE…QCLIQDGILN (81 aa). The short motif at 300 to 306 is the Nuclear localization signal element; sequence PYKRRKK. The tract at residues 404–479 is interaction with LMO4; it reads IAPFPEAALP…QLKTLFEQAK (76 aa). Position 433 is a phosphothreonine (Thr433). A phosphoserine mark is found at Ser444 and Ser449. The Zn(2+) site is built by Cys505, Cys508, Cys516, Cys519, Cys525, Cys529, His537, and Cys541. Residues 505-541 form an MYND-type zinc finger; sequence CVNCGREAMSECTGCHKVNYCSTFCQRKDWKDHQHVC.

In terms of assembly, homodimer. Isoform 1 and isoform 2 may form a heterodimer. May interact with the corepressors NCOR1 and NCRO2. Identified in a complex with XRCC5 and XRCC6. Interacts (via the SAND domain) with the DNA-PK complex subunit XRCC6; the interaction is direct with XRCC6 and may be inhibited by DNA-binding. Interacts with LMO4; LMO4 blocks export from nucleus. Interacts with LMO2 and CLIM2. Post-translationally, may be phosphorylated by DNA-PK complex in a DNA independent manner (in vitro). Ubiquitously expressed during embryogenesis, with higher expression in regions of the central nervous system, dorsal root ganglia, submandibular gland, epidermis and breast. In 12-week-old NOD mice, expression of isoform 2 is sevenfold higher in lymph node stromal elements than in T-cells and tenfold higher than in B-cells.

It localises to the nucleus. Its subcellular location is the cytoplasm. Its function is as follows. Transcription factor that binds to sequence with multiple copies of 5'-TTC[CG]G-3' present in its own promoter and that of the HNRPA2B1 gene. Down-regulates transcription of these genes. Binds to the retinoic acid response element (RARE) 5'-AGGGTTCACCGAAAGTTCA-3'. Activates the proenkephalin gene independently of promoter binding, probably through protein-protein interaction. Regulates epithelial cell proliferation and side-branching in the mammary gland. Required for neural tube closure and skeletal patterning. Controls the expression of peripheral tissue antigens in pancreatic lymph nodes. Isoform 1 displays greater transcriptional activity than isoform 2. Isoform 2 may inhibit transcriptional activity of isoform 1 by interacting with it and retaining it in the cytoplasm. Transcriptional activator of EIF4G3. May also involved in behavior. The polypeptide is Deformed epidermal autoregulatory factor 1 homolog (Deaf1) (Mus musculus (Mouse)).